Here is a 196-residue protein sequence, read N- to C-terminus: Nucleoside triphosphate pyrophosphatase (196 aa).

The active-site Proton acceptor is the Asp-73.

Belongs to the Maf family. A divalent metal cation serves as cofactor.

Its subcellular location is the cytoplasm. The enzyme catalyses a ribonucleoside 5'-triphosphate + H2O = a ribonucleoside 5'-phosphate + diphosphate + H(+). It catalyses the reaction a 2'-deoxyribonucleoside 5'-triphosphate + H2O = a 2'-deoxyribonucleoside 5'-phosphate + diphosphate + H(+). Nucleoside triphosphate pyrophosphatase. May have a dual role in cell division arrest and in preventing the incorporation of modified nucleotides into cellular nucleic acids. The protein is Nucleoside triphosphate pyrophosphatase of Anaplasma marginale (strain St. Maries).